The primary structure comprises 149 residues: Transcriptional regulator MraZ (149 aa).

SpoVT-AbrB domains follow at residues 6 to 52 and 81 to 124; these read RSHR…PYPD and AEEM…DQSK.

The protein belongs to the MraZ family. Forms oligomers.

The protein localises to the cytoplasm. The protein resides in the nucleoid. The sequence is that of Transcriptional regulator MraZ from Nitratidesulfovibrio vulgaris (strain ATCC 29579 / DSM 644 / CCUG 34227 / NCIMB 8303 / VKM B-1760 / Hildenborough) (Desulfovibrio vulgaris).